A 352-amino-acid chain; its full sequence is MSQKILFIDRDGTLIEEPKSDFQIDTLEKLRFEKDAIPTLLKLKKFGFKFVMVSNQDGLGTPSFPKENFEIAHEKMLDILKSCGIEFQDIFICPHFENENCACRKPKTAMLEEYIKHELYDKEQSFVIGDRESDMILASNLGVRGLKYGELSWKEIENEILSSFRSASYQRTTKETDIKVKVCLNGGKVSIKTGIDFFDHMLEQIAVHGGIGLEISCKGDLEIDEHHSVEDVALALGACIKKALGDKIGIARYGFALPMDECLASCAMDFCNRPHLVYKAKFKKSHLGALSTEMIEHFFYSLSYAMGVSLHLKVKGKNDHHKAEGLFKAFAKALKMAVKIESENLASSKGVI.

The tract at residues 1–164 is histidinol-phosphatase; it reads MSQKILFIDR…EIENEILSSF (164 aa). Catalysis depends on D9, which acts as the Nucleophile. Residues D9 and D11 each coordinate Mg(2+). The Proton donor role is filled by D11. Zn(2+)-binding residues include C93, H95, C101, and C103. D130 is a Mg(2+) binding site. Residues 165-352 form an imidazoleglycerol-phosphate dehydratase region; the sequence is RSASYQRTTK…ENLASSKGVI (188 aa).

In the N-terminal section; belongs to the histidinol-phosphatase family. It in the C-terminal section; belongs to the imidazoleglycerol-phosphate dehydratase family. Requires Mg(2+) as cofactor. Zn(2+) is required as a cofactor.

It localises to the cytoplasm. The enzyme catalyses D-erythro-1-(imidazol-4-yl)glycerol 3-phosphate = 3-(imidazol-4-yl)-2-oxopropyl phosphate + H2O. It catalyses the reaction L-histidinol phosphate + H2O = L-histidinol + phosphate. Its pathway is amino-acid biosynthesis; L-histidine biosynthesis; L-histidine from 5-phospho-alpha-D-ribose 1-diphosphate: step 6/9. It functions in the pathway amino-acid biosynthesis; L-histidine biosynthesis; L-histidine from 5-phospho-alpha-D-ribose 1-diphosphate: step 8/9. This is Histidine biosynthesis bifunctional protein HisB from Campylobacter jejuni subsp. jejuni serotype O:2 (strain ATCC 700819 / NCTC 11168).